Here is an 887-residue protein sequence, read N- to C-terminus: Dystrophin-like protein 1 (887 aa).

A PID domain is found at 30–197 (YQHGIHFEAK…KISMQSEDEA (168 aa)). Basic and acidic residues-rich tracts occupy residues 176 to 186 (MQEKHEDEAAK) and 205 to 216 (IEERGGREEDSR). 5 disordered regions span residues 176 to 254 (MQEK…GTAI), 506 to 606 (EIHH…QYER), 641 to 753 (QFDM…KNTA), 804 to 839 (IAEE…PPNT), and 853 to 887 (NVDR…GYPQ). The segment covering 242-254 (KPSTTSSSGGTAI) has biased composition (polar residues). Positions 434 to 506 (QLMRSQLDQA…QMLETKITSE (73 aa)) form a coiled coil. Residues 510–519 (SSSQPPQHQP) show a composition bias toward low complexity. Over residues 573–588 (KESKERRKDEGTRTEP) the composition is skewed to basic and acidic residues. A compositionally biased stretch (polar residues) spans 597 to 606 (DYSSSDQYER). 2 stretches are compositionally biased toward polar residues: residues 816 to 827 (NRNNLPSSTNSS) and 863 to 887 (SLLT…GYPQ).

Component of the dystrophin glycoprotein complex (DGC). Interacts with zyx-1. Expressed in muscles of the head, body wall and vulva. In some animals, weaker expression is observed in the intestinal muscles (at protein level). Isoform a is expressed in lateral neurons SDQL and SDQR.

In terms of biological role, together with dys-1 and hlh-1, participates in a common muscular function. This is Dystrophin-like protein 1 from Caenorhabditis elegans.